The chain runs to 236 residues: ATP phosphoribosyltransferase (236 aa).

It belongs to the ATP phosphoribosyltransferase family. Short subfamily. Heteromultimer composed of HisG and HisZ subunits.

Its subcellular location is the cytoplasm. The catalysed reaction is 1-(5-phospho-beta-D-ribosyl)-ATP + diphosphate = 5-phospho-alpha-D-ribose 1-diphosphate + ATP. Its pathway is amino-acid biosynthesis; L-histidine biosynthesis; L-histidine from 5-phospho-alpha-D-ribose 1-diphosphate: step 1/9. Its function is as follows. Catalyzes the condensation of ATP and 5-phosphoribose 1-diphosphate to form N'-(5'-phosphoribosyl)-ATP (PR-ATP). Has a crucial role in the pathway because the rate of histidine biosynthesis seems to be controlled primarily by regulation of HisG enzymatic activity. This chain is ATP phosphoribosyltransferase (hisG), found in Cereibacter sphaeroides (strain ATCC 17023 / DSM 158 / JCM 6121 / CCUG 31486 / LMG 2827 / NBRC 12203 / NCIMB 8253 / ATH 2.4.1.) (Rhodobacter sphaeroides).